The chain runs to 244 residues: Carboxy-S-adenosyl-L-methionine synthase (244 aa).

Residues tyrosine 40, 65-67 (GCS), 90-91 (DN), 119-120 (DL), asparagine 134, and arginine 201 contribute to the S-adenosyl-L-methionine site.

Belongs to the class I-like SAM-binding methyltransferase superfamily. Cx-SAM synthase family. In terms of assembly, homodimer.

It carries out the reaction prephenate + S-adenosyl-L-methionine = carboxy-S-adenosyl-L-methionine + 3-phenylpyruvate + H2O. In terms of biological role, catalyzes the conversion of S-adenosyl-L-methionine (SAM) to carboxy-S-adenosyl-L-methionine (Cx-SAM). The sequence is that of Carboxy-S-adenosyl-L-methionine synthase from Trichlorobacter lovleyi (strain ATCC BAA-1151 / DSM 17278 / SZ) (Geobacter lovleyi).